Here is a 242-residue protein sequence, read N- to C-terminus: Cell division protein FtsQ (242 aa).

Topologically, residues 1 to 12 (MWDNAEAMERLT) are cytoplasmic. The helical transmembrane segment at 13–32 (RWLLVMMAMLLAASGLVWFY) threads the bilayer. Residues 33-242 (NSNHLPVKQV…DGLPEKESEE (210 aa)) lie on the Periplasmic side of the membrane. The 70-residue stretch at 37–106 (LPVKQVSLKG…DTVEVVLTER (70 aa)) folds into the POTRA domain.

Belongs to the FtsQ/DivIB family. FtsQ subfamily. As to quaternary structure, part of a complex composed of FtsB, FtsL and FtsQ.

It is found in the cell inner membrane. In terms of biological role, essential cell division protein. May link together the upstream cell division proteins, which are predominantly cytoplasmic, with the downstream cell division proteins, which are predominantly periplasmic. May control correct divisome assembly. The sequence is that of Cell division protein FtsQ from Neisseria gonorrhoeae (strain ATCC 700825 / FA 1090).